We begin with the raw amino-acid sequence, 162 residues long: Transcriptional repressor NrdR (162 aa).

A zinc finger lies at 3–34; the sequence is CPYCHHTDSRVLESRSAEGGQSIRRRRECLAC. The 91-residue stretch at 49–139 folds into the ATP-cone domain; the sequence is ITVIKRNGDR…VYRQFQGISD (91 aa).

It belongs to the NrdR family. It depends on Zn(2+) as a cofactor.

Negatively regulates transcription of bacterial ribonucleotide reductase nrd genes and operons by binding to NrdR-boxes. The protein is Transcriptional repressor NrdR of Thermosynechococcus vestitus (strain NIES-2133 / IAM M-273 / BP-1).